The following is a 209-amino-acid chain: Orotate phosphoribosyltransferase (209 aa).

5-phospho-alpha-D-ribose 1-diphosphate-binding positions include Arg-96, Lys-100, His-102, and 122-130; that span reads EDLISTGGS. Position 126 (Ser-126) interacts with orotate.

This sequence belongs to the purine/pyrimidine phosphoribosyltransferase family. PyrE subfamily. As to quaternary structure, homodimer. The cofactor is Mg(2+).

The catalysed reaction is orotidine 5'-phosphate + diphosphate = orotate + 5-phospho-alpha-D-ribose 1-diphosphate. The protein operates within pyrimidine metabolism; UMP biosynthesis via de novo pathway; UMP from orotate: step 1/2. Catalyzes the transfer of a ribosyl phosphate group from 5-phosphoribose 1-diphosphate to orotate, leading to the formation of orotidine monophosphate (OMP). This chain is Orotate phosphoribosyltransferase, found in Listeria monocytogenes serotype 4b (strain F2365).